The following is a 116-amino-acid chain: Large ribosomal subunit protein uL18 (116 aa).

It belongs to the universal ribosomal protein uL18 family. Part of the 50S ribosomal subunit; part of the 5S rRNA/L5/L18/L25 subcomplex. Contacts the 5S and 23S rRNAs.

Its function is as follows. This is one of the proteins that bind and probably mediate the attachment of the 5S RNA into the large ribosomal subunit, where it forms part of the central protuberance. The chain is Large ribosomal subunit protein uL18 from Shewanella oneidensis (strain ATCC 700550 / JCM 31522 / CIP 106686 / LMG 19005 / NCIMB 14063 / MR-1).